The chain runs to 329 residues: Phosphate acyltransferase (329 aa).

This sequence belongs to the PlsX family. As to quaternary structure, homodimer. Probably interacts with PlsY.

The protein resides in the cytoplasm. It catalyses the reaction a fatty acyl-[ACP] + phosphate = an acyl phosphate + holo-[ACP]. The protein operates within lipid metabolism; phospholipid metabolism. In terms of biological role, catalyzes the reversible formation of acyl-phosphate (acyl-PO(4)) from acyl-[acyl-carrier-protein] (acyl-ACP). This enzyme utilizes acyl-ACP as fatty acyl donor, but not acyl-CoA. The chain is Phosphate acyltransferase from Campylobacter lari (strain RM2100 / D67 / ATCC BAA-1060).